We begin with the raw amino-acid sequence, 325 residues long: Interferon regulatory factor 1 (325 aa).

Positions 5–113 (RMRMRPWLEM…SAVRVYRMLP (109 aa)) form a DNA-binding region, IRF tryptophan pentad repeat. The residue at position 78 (Lys78) is an N6-acetyllysine. The interval 92 to 165 (EEVKDQSRNK…TLPDDHSSYT (74 aa)) is disordered. Residues 141-157 (GDSSPDTFSDGLSSSTL) show a composition bias toward polar residues. Residues Lys275 and Lys299 each participate in a glycyl lysine isopeptide (Lys-Gly) (interchain with G-Cter in SUMO) cross-link.

Belongs to the IRF family. In terms of assembly, monomer. Homodimer. Interacts with EP300. Interacts with MYD88. Interacts with PIAS3. Interacts with SPOP. In terms of processing, phosphorylated by CK2 and this positively regulates its activity. Post-translationally, sumoylation represses the transcriptional activity and displays enhanced resistance to protein degradation. Sumoylated by UBE2I/UBC9 and SUMO1. Inactivates the tumor suppressor activity. Elevated levels in tumor cells. Major site is Lys-275. Sumoylation is enhanced by PIAS3. Desumoylated by SENP1 in tumor cells and appears to compete with ubiquitination on C-terminal sites. Ubiquitinated in a SPOP-depedent manner. Appears to compete with sumoylation on C-terminal sites.

The protein localises to the nucleus. It localises to the cytoplasm. With respect to regulation, activated by MYD88. Functionally, transcriptional regulator which displays a remarkable functional diversity in the regulation of cellular responses. Regulates transcription of IFN and IFN-inducible genes, host response to viral and bacterial infections, regulation of many genes expressed during hematopoiesis, inflammation, immune responses and cell proliferation and differentiation, regulation of the cell cycle and induction of growth arrest and programmed cell death following DNA damage. Stimulates both innate and acquired immune responses through the activation of specific target genes and can act as a transcriptional activator and repressor regulating target genes by binding to an interferon-stimulated response element (ISRE) in their promoters. Has an essentail role in IFNG-dependent immunity to mycobacteria. Competes with the transcriptional repressor ZBED2 for binding to a common consensus sequence in gene promoters. Its target genes for transcriptional activation activity include: genes involved in anti-viral response, such as IFN-alpha/beta, RIGI, TNFSF10/TRAIL, ZBP1, OAS1/2, PIAS1/GBP, EIF2AK2/PKR and RSAD2/viperin; antibacterial response, such as GBP2, GBP5 and NOS2/INOS; anti-proliferative response, such as p53/TP53, LOX and CDKN1A; apoptosis, such as BBC3/PUMA, CASP1, CASP7 and CASP8; immune response, such as IL7, IL12A/B and IL15, PTGS2/COX2 and CYBB; DNA damage responses and DNA repair, such as POLQ/POLH; MHC class I expression, such as TAP1, PSMB9/LMP2, PSME1/PA28A, PSME2/PA28B and B2M and MHC class II expression, such as CIITA; metabolic enzymes, such as ACOD1/IRG1. Represses genes involved in anti-proliferative response, such as BIRC5/survivin, CCNB1, CCNE1, CDK1, CDK2 and CDK4 and in immune response, such as FOXP3, IL4, ANXA2 and TLR4. Stimulates p53/TP53-dependent transcription through enhanced recruitment of EP300 leading to increased acetylation of p53/TP53. Plays an important role in immune response directly affecting NK maturation and activity, macrophage production of IL12, Th1 development and maturation of CD8+ T-cells. Also implicated in the differentiation and maturation of dendritic cells and in the suppression of regulatory T (Treg) cells development. Acts as a tumor suppressor and plays a role not only in antagonism of tumor cell growth but also in stimulating an immune response against tumor cells. In Homo sapiens (Human), this protein is Interferon regulatory factor 1 (IRF1).